The following is a 435-amino-acid chain: MVLPTLAIVGRPNVGKSTIFNRILGERVSIVEDTPGVTRDRIYGKSEWLGKEFAVIDTGGIDLGDEPFLAQIKDQAEIAIDEADVILFLADIESGVTDADERVAQILYRAKKPVVLAVNKVDNPERRQDIYDFYSLGFGEPYPLSGTHGIGLGDVLDAVLAAFPSEDKSVEDDSIKFSLIGRPNVGKSSLVNAILGENRVIVSPIEGTTRDAIDTKFEAVDETFTMIDTAGIRKRGKVYENTEKYAVMRALRAIDRSDVVLFVINAEEGIREQDKKVAGYAHEAGRGIIIVVNKWDTVEKDNHTMKDFENLIRQEFQYLDYAPIIFVSAKTKQRLQSLPAMIVAVSENQTRRIQSSVLNDVLMDAITVTPTPTVNGKRLRIYYMTQVAVKPPTFVVFVNDPDLLHFSYERFLINQLRQAFDFSGTPIHIIARKRK.

2 consecutive EngA-type G domains span residues proline 4–aspartate 167 and isoleucine 175–threonine 350. GTP-binding positions include glycine 10–serine 17, aspartate 57–isoleucine 61, asparagine 119–aspartate 122, glycine 181–serine 188, aspartate 228–isoleucine 232, and asparagine 293–aspartate 296. Positions arginine 351–lysine 435 constitute a KH-like domain.

The protein belongs to the TRAFAC class TrmE-Era-EngA-EngB-Septin-like GTPase superfamily. EngA (Der) GTPase family. As to quaternary structure, associates with the 50S ribosomal subunit.

In terms of biological role, GTPase that plays an essential role in the late steps of ribosome biogenesis. The chain is GTPase Der from Lacticaseibacillus paracasei (strain ATCC 334 / BCRC 17002 / CCUG 31169 / CIP 107868 / KCTC 3260 / NRRL B-441) (Lactobacillus paracasei).